A 398-amino-acid polypeptide reads, in one-letter code: Argininosuccinate synthase (398 aa).

8 to 16 (AYSGGLDTS) serves as a coordination point for ATP. Residue Tyr87 coordinates L-citrulline. Gly117 contacts ATP. Positions 119, 123, and 124 each coordinate L-aspartate. Asn123 contacts L-citrulline. Positions 127, 175, 260, and 272 each coordinate L-citrulline.

It belongs to the argininosuccinate synthase family. Type 1 subfamily. As to quaternary structure, homotetramer.

The protein resides in the cytoplasm. The enzyme catalyses L-citrulline + L-aspartate + ATP = 2-(N(omega)-L-arginino)succinate + AMP + diphosphate + H(+). Its pathway is amino-acid biosynthesis; L-arginine biosynthesis; L-arginine from L-ornithine and carbamoyl phosphate: step 2/3. This is Argininosuccinate synthase from Mycobacterium tuberculosis (strain ATCC 25618 / H37Rv).